Consider the following 274-residue polypeptide: Major capsid protein (274 aa).

The protein resides in the virion. In terms of biological role, assembles to form an icosahedral capsid. This chain is Major capsid protein, found in Staphylococcus phage phiMR11.